The sequence spans 1486 residues: Homeobox protein cut-like 2 (1486 aa).

Residues 114 to 167 are disordered; sequence DRLQPPSFDPSGQPRRDLHTSWKRNPELLSPKEQREGTSPAGPTLTEGSRLPGI. The span at 127–149 shows a compositional bias: basic and acidic residues; the sequence is PRRDLHTSWKRNPELLSPKEQRE. Ser143 is subject to Phosphoserine. Residues 195–374 are a coiled coil; it reads TLAARLGEAE…IKTELSILKA (180 aa). Disordered regions lie at residues 415 to 481, 517 to 549, 661 to 690, 716 to 758, 800 to 858, and 964 to 1032; these read LLAS…LSPF, PTAP…PGAE, EIES…STSE, VAPR…AQAP, YASV…EGAT, and GQAV…SGSQ. Over residues 419–428 the composition is skewed to acidic residues; it reads PEEDPSEDDS. Over residues 443-460 the composition is skewed to pro residues; the sequence is QQLPPPPGPEDPLSPSPG. Low complexity predominate over residues 461–470; it reads QPLLGPSLGP. Over residues 517-532 the composition is skewed to pro residues; it reads PTAPATPAPGPEPLGG. A DNA-binding region (CUT 1) is located at residues 544-631; it reads AGPGAEEEQL…VLALRTIQVR (88 aa). A compositionally biased stretch (polar residues) spans 680-690; sequence ANGTTPASTSE. Residues 690 to 717 adopt a coiled-coil conformation; it reads EDAIKSILEQARREMQAQQQALLEMEVA. Over residues 802–816 the composition is skewed to low complexity; sequence SVSPSLSSSSSSGYS. Residues 834–844 are compositionally biased toward acidic residues; sequence PEDEAAAGAED. A compositionally biased stretch (basic and acidic residues) spans 845–854; the sequence is EPPRTGELKA. The segment at residues 887 to 974 is a DNA-binding region (CUT 2); sequence QYELYMYREV…QAVGQQPGAS (88 aa). Residues 967–976 show a composition bias toward polar residues; that stretch reads VGQQPGASQA. Over residues 1017 to 1031 the composition is skewed to low complexity; that stretch reads GRSSSSLSGKMYSGS. Residues 1038–1125 constitute a DNA-binding region (CUT 3); it reads QEIVAMSPEL…VEKLRDMKKL (88 aa). A DNA-binding region (homeobox) is located at residues 1168-1227; the sequence is IKKPRVVLAPEEKEALRKAYQLEPYPSQQTIELLSFQLNLKTNTVINWFHNYRSRMRREM. The interval 1231–1453 is disordered; sequence GTQDEPDLDP…ALHPSAKVNP (223 aa). Residues 1266-1276 are compositionally biased toward basic and acidic residues; that stretch reads EDQKPTVKELE. Residues 1283 to 1293 are compositionally biased toward polar residues; that stretch reads ENSTPLTTQDK. The span at 1320-1334 shows a compositional bias: basic and acidic residues; it reads ELDKGQGPPKEEHPD. The segment covering 1381–1401 has biased composition (polar residues); sequence KSASESSRCSLEVSLNSPSAA. Residues 1402–1420 are compositionally biased toward low complexity; the sequence is SSPGLMMSVSPVPSSSAPI. Positions 1421-1431 are enriched in pro residues; sequence SPSPPGAPPAK.

Belongs to the CUT homeobox family.

It is found in the nucleus. Transcription factor involved in the control of neuronal proliferation and differentiation in the brain. Regulates dendrite development and branching, dendritic spine formation, and synaptogenesis in cortical layers II-III. Binds to DNA in a sequence-specific manner. The polypeptide is Homeobox protein cut-like 2 (CUX2) (Homo sapiens (Human)).